The primary structure comprises 70 residues: Large ribosomal subunit protein bL31c (70 aa).

It belongs to the bacterial ribosomal protein bL31 family. Type A subfamily. In terms of assembly, part of the 50S ribosomal subunit.

The protein resides in the plastid. It is found in the chloroplast. Functionally, binds the 23S rRNA. The chain is Large ribosomal subunit protein bL31c from Pyropia yezoensis (Susabi-nori).